The primary structure comprises 292 residues: Transmembrane and ubiquitin-like domain-containing protein 1 (292 aa).

The chain crosses the membrane as a helical span at residues 11 to 31 (VTLLFGVVFLVLVLVLAWAST). Residues 34 to 143 (VEPPEHLLSP…TQPSAEDAAS (110 aa)) form a disordered region. Basic and acidic residues predominate over residues 71–80 (VRDEDDKSEP). Low complexity predominate over residues 84-94 (AGAAGQSADGS). In terms of domain architecture, Ubiquitin-like spans 149–222 (MVLRLKFLND…LHCHISQHAT (74 aa)). A run of 2 helical transmembrane segments spans residues 237 to 257 (VALNVGSLMVPLFVLMLSVLW) and 269 to 289 (APATASLVGITIFFSFVAFGV).

The protein resides in the membrane. It is found in the cytoplasm. It localises to the nucleus. Functionally, may contribute to the regulation of translation during cell-cycle progression. May contribute to the regulation of cell proliferation. The membrane form is involved in sterol-regulated ubiquitination and degradation of HMG-CoA reductase HMGCR. May be involved in centrosome assembly. The sequence is that of Transmembrane and ubiquitin-like domain-containing protein 1 (tmub1) from Danio rerio (Zebrafish).